Reading from the N-terminus, the 161-residue chain is Ribosome maturation factor RimP (161 aa).

The protein belongs to the RimP family.

The protein resides in the cytoplasm. Functionally, required for maturation of 30S ribosomal subunits. The sequence is that of Ribosome maturation factor RimP from Rickettsia rickettsii (strain Iowa).